The primary structure comprises 531 residues: Light-independent protochlorophyllide reductase subunit B (531 aa).

Residue aspartate 36 participates in [4Fe-4S] cluster binding. Aspartate 296 functions as the Proton donor in the catalytic mechanism. 431 to 432 (GM) provides a ligand contact to substrate.

The protein belongs to the ChlB/BchB/BchZ family. In terms of assembly, protochlorophyllide reductase is composed of three subunits; ChlL, ChlN and ChlB. Forms a heterotetramer of two ChlB and two ChlN subunits. [4Fe-4S] cluster serves as cofactor.

The protein localises to the plastid. The protein resides in the chloroplast. The catalysed reaction is chlorophyllide a + oxidized 2[4Fe-4S]-[ferredoxin] + 2 ADP + 2 phosphate = protochlorophyllide a + reduced 2[4Fe-4S]-[ferredoxin] + 2 ATP + 2 H2O. It participates in porphyrin-containing compound metabolism; chlorophyll biosynthesis (light-independent). Its function is as follows. Component of the dark-operative protochlorophyllide reductase (DPOR) that uses Mg-ATP and reduced ferredoxin to reduce ring D of protochlorophyllide (Pchlide) to form chlorophyllide a (Chlide). This reaction is light-independent. The NB-protein (ChlN-ChlB) is the catalytic component of the complex. The protein is Light-independent protochlorophyllide reductase subunit B of Nephroselmis olivacea (Green alga).